Reading from the N-terminus, the 297-residue chain is Oxidoreductase R1 (297 aa).

It belongs to the asaB hydroxylase/desaturase family.

It participates in secondary metabolite biosynthesis. Oxidoreductase; part of the gene cluster that mediates the biosynthesis of squalestatin S1 (SQS1, also known as zaragozic acid A), a heavily oxidized fungal polyketide that offers potent cholesterol lowering activity by targeting squalene synthase (SS). SQS1 is composed of a 2,8-dioxobicyclic[3.2.1]octane-3,4,5-tricarboxyclic acid core that is connected to two lipophilic polyketide arms. These initial steps feature the priming of an unusual benzoic acid starter unit onto the highly reducing polyketide synthase pks2, followed by oxaloacetate extension and product release to generate a tricarboxylic acid containing product. The phenylalanine ammonia lyase (PAL) M7 and the acyl-CoA ligase M9 are involved in transforming phenylalanine into benzoyl-CoA. The citrate synthase-like protein R3 is involved in connecting the C-alpha-carbons of the hexaketide chain and oxaloacetate to afford the tricarboxylic acid unit. The potential hydrolytic enzymes, M8 and M10, are in close proximity to pks2 and may participate in product release. On the other side, the tetraketide arm is synthesized by a the squalestatin tetraketide synthase pks1 and enzymatically esterified to the core in the last biosynthetic step, by the acetyltransferase M4. The biosynthesis of the tetraketide must involve 3 rounds of chain extension. After the first and second rounds methyl-transfer occurs, and in all rounds of extension the ketoreductase and dehydratase are active. The enoyl reductase and C-MeT of pks1 are not active in the final round of extension. The acetyltransferase M4 appears to have a broad substrate selectivity for its acyl CoA substrate, allowing the in vitro synthesis of novel squalestatins. The biosynthesis of SQS1 requires several oxidative steps likely performed by oxidoreductases M1, R1 and R2. Finally, in support of the identification of the cluster as being responsible for SQS1 production, the cluster contains a gene encoding a putative squalene synthase (SS) R6, suggesting a likely mechanism for self-resistance. This is Oxidoreductase R1 from Phoma sp. (strain ATCC 20986 / MF5453).